The primary structure comprises 284 residues: Bifunctional protein FolD (284 aa).

Residues glycine 165–serine 167 and serine 190 contribute to the NADP(+) site.

It belongs to the tetrahydrofolate dehydrogenase/cyclohydrolase family. As to quaternary structure, homodimer.

The catalysed reaction is (6R)-5,10-methylene-5,6,7,8-tetrahydrofolate + NADP(+) = (6R)-5,10-methenyltetrahydrofolate + NADPH. The enzyme catalyses (6R)-5,10-methenyltetrahydrofolate + H2O = (6R)-10-formyltetrahydrofolate + H(+). It functions in the pathway one-carbon metabolism; tetrahydrofolate interconversion. Its function is as follows. Catalyzes the oxidation of 5,10-methylenetetrahydrofolate to 5,10-methenyltetrahydrofolate and then the hydrolysis of 5,10-methenyltetrahydrofolate to 10-formyltetrahydrofolate. The sequence is that of Bifunctional protein FolD from Streptococcus mutans serotype c (strain ATCC 700610 / UA159).